The primary structure comprises 426 residues: Glutamate-1-semialdehyde 2,1-aminomutase (426 aa).

Lysine 265 bears the N6-(pyridoxal phosphate)lysine mark.

Belongs to the class-III pyridoxal-phosphate-dependent aminotransferase family. HemL subfamily. Homodimer. It depends on pyridoxal 5'-phosphate as a cofactor.

It is found in the cytoplasm. The enzyme catalyses (S)-4-amino-5-oxopentanoate = 5-aminolevulinate. The protein operates within porphyrin-containing compound metabolism; protoporphyrin-IX biosynthesis; 5-aminolevulinate from L-glutamyl-tRNA(Glu): step 2/2. The sequence is that of Glutamate-1-semialdehyde 2,1-aminomutase from Salmonella paratyphi A (strain ATCC 9150 / SARB42).